The sequence spans 507 residues: ATP synthase subunit alpha, chloroplastic (507 aa).

An ATP-binding site is contributed by Gly-170–Thr-177.

It belongs to the ATPase alpha/beta chains family. F-type ATPases have 2 components, CF(1) - the catalytic core - and CF(0) - the membrane proton channel. CF(1) has five subunits: alpha(3), beta(3), gamma(1), delta(1), epsilon(1). CF(0) has four main subunits: a, b, b' and c.

Its subcellular location is the plastid. The protein resides in the chloroplast thylakoid membrane. It carries out the reaction ATP + H2O + 4 H(+)(in) = ADP + phosphate + 5 H(+)(out). Functionally, produces ATP from ADP in the presence of a proton gradient across the membrane. The alpha chain is a regulatory subunit. In Eucalyptus globulus subsp. globulus (Tasmanian blue gum), this protein is ATP synthase subunit alpha, chloroplastic.